The primary structure comprises 646 residues: RNA-binding protein RMD9, mitochondrial (646 aa).

Residues 1–14 (MMLRRNAVRSLKTM) constitute a mitochondrion transit peptide. Positions 15–51 (EISVSNVVNSGSIAMLRGKLANVVLSDRTYHSSPIFH) are cleaved as a propeptide — removed in mature form. A PPR1 repeat occupies 209-238 (VSGYGATHLLTSFKELSFDDDCIRIWEASK). The stretch at 251–282 (EPKVVGFMLPLLYAKTRSLTEPNELYNQIIQS) is one PPR2 repeat. The PPR3 repeat unit spans residues 288–317 (PNLYSGLIKVFIKAEDYEKALSLFGQLCEK). The stretch at 323 to 353 (YGYLIETHLSFIGDSKNLTLAESFFDKIIND) is one PPR4 repeat. One copy of the PPR5 repeat lies at 363–394 (VSTVNSFLQNIWKAQNDFDHVYRIWEKAVKFY). One copy of the PPR6 repeat lies at 401–439 (GILSSLNNTFFTIFFENYINDNINGFRKLQEIITFYSGV). One copy of the PPR7 repeat lies at 444 to 473 (EPFFNVMLTRASIWHERSIIDFIDKNYTLY). The stretch at 481–514 (SYRILLKSLGSIDNTNNEEILDRWLELVKKLNEL) is one PPR8 repeat.

Belongs to the RMD9 family. In terms of assembly, monomer. Post-translationally, phosphorylated. Phosphorylation promotes binding to RNA.

The protein localises to the mitochondrion inner membrane. In terms of biological role, binds the RNA motif 5'-AAUAA[U/C]AUUCUU-3' in the 3'-UTR of mitochondrial mRNAs. Involved in the processing or stability of mitochondrial mRNAs. In Saccharomyces cerevisiae (strain ATCC 204508 / S288c) (Baker's yeast), this protein is RNA-binding protein RMD9, mitochondrial.